The primary structure comprises 565 residues: Membrane protein insertase YidC (565 aa).

The next 6 membrane-spanning stretches (helical) occupy residues 6-26, 348-368, 370-390, 437-457, 479-499, and 516-536; these read VLLI…WSKN, LMAL…SLLH, WGWA…PLSA, GGCF…WVLV, PYFI…KLTP, and PLIF…YWVI.

The protein belongs to the OXA1/ALB3/YidC family. Type 1 subfamily. Interacts with the Sec translocase complex via SecD. Specifically interacts with transmembrane segments of nascent integral membrane proteins during membrane integration.

It localises to the cell inner membrane. In terms of biological role, required for the insertion and/or proper folding and/or complex formation of integral membrane proteins into the membrane. Involved in integration of membrane proteins that insert both dependently and independently of the Sec translocase complex, as well as at least some lipoproteins. Aids folding of multispanning membrane proteins. This chain is Membrane protein insertase YidC, found in Xylella fastidiosa (strain M23).